The following is a 103-amino-acid chain: Histone H4 (103 aa).

Residues 1-14 show a composition bias toward gly residues; it reads MSGRGKGGKGLGKG. Positions 1 to 20 are disordered; that stretch reads MSGRGKGGKGLGKGGAKRHR. S2 is modified (N-acetylserine). Position 17 is an N6-acetyllysine (K17). A DNA-binding region spans residues 17–21; it reads KRHRK. Position 21 is an N6-methyllysine (K21).

Belongs to the histone H4 family. The nucleosome is a histone octamer containing two molecules each of H2A, H2B, H3 and H4 assembled in one H3-H4 heterotetramer and two H2A-H2B heterodimers. The octamer wraps approximately 147 bp of DNA.

The protein resides in the nucleus. The protein localises to the chromosome. Its function is as follows. Core component of nucleosome. Nucleosomes wrap and compact DNA into chromatin, limiting DNA accessibility to the cellular machineries which require DNA as a template. Histones thereby play a central role in transcription regulation, DNA repair, DNA replication and chromosomal stability. DNA accessibility is regulated via a complex set of post-translational modifications of histones, also called histone code, and nucleosome remodeling. In Pyrenomonas salina, this protein is Histone H4.